Consider the following 106-residue polypeptide: Large ribosomal subunit protein eL42 (106 aa).

The segment at 36–56 is disordered; that stretch reads FAQGKRRYDRKQSGYGGQTKP.

This sequence belongs to the eukaryotic ribosomal protein eL42 family.

The polypeptide is Large ribosomal subunit protein eL42 (RPL44) (Phaffia rhodozyma (Yeast)).